Here is a 374-residue protein sequence, read N- to C-terminus: tRNA N6-adenosine threonylcarbamoyltransferase (374 aa).

2 residues coordinate Fe cation: H117 and H121. Residues 140–144 (LVSGG), D174, G187, D191, and N283 contribute to the substrate site. Fe cation is bound at residue D311. Over residues 337–352 (ADSSLPVTEPHVPGQG) the composition is skewed to low complexity. A disordered region spans residues 337–374 (ADSSLPVTEPHVPGQGHPHGHPHGHDHVHEVSKENLYS). The span at 359–374 (HGHDHVHEVSKENLYS) shows a compositional bias: basic and acidic residues.

Belongs to the KAE1 / TsaD family. The cofactor is Fe(2+).

Its subcellular location is the cytoplasm. It catalyses the reaction L-threonylcarbamoyladenylate + adenosine(37) in tRNA = N(6)-L-threonylcarbamoyladenosine(37) in tRNA + AMP + H(+). Required for the formation of a threonylcarbamoyl group on adenosine at position 37 (t(6)A37) in tRNAs that read codons beginning with adenine. Is involved in the transfer of the threonylcarbamoyl moiety of threonylcarbamoyl-AMP (TC-AMP) to the N6 group of A37, together with TsaE and TsaB. TsaD likely plays a direct catalytic role in this reaction. In Streptomyces coelicolor (strain ATCC BAA-471 / A3(2) / M145), this protein is tRNA N6-adenosine threonylcarbamoyltransferase.